We begin with the raw amino-acid sequence, 216 residues long: MOB kinase activator 3C (216 aa).

4 residues coordinate Zn(2+): Cys-82, Cys-87, His-164, and His-169.

The protein belongs to the MOB1/phocein family.

Functionally, may regulate the activity of kinases. The polypeptide is MOB kinase activator 3C (Mob3c) (Mus musculus (Mouse)).